Reading from the N-terminus, the 510-residue chain is D-alanine--D-alanyl carrier protein ligase (510 aa).

Residue 157–158 (TS) coordinates ATP. Aspartate 202 provides a ligand contact to D-alanine. Residue 297-302 (NTYGPT) participates in ATP binding. Residue valine 306 coordinates D-alanine. ATP contacts are provided by aspartate 389 and lysine 498. Lysine 498 serves as a coordination point for D-alanine.

This sequence belongs to the ATP-dependent AMP-binding enzyme family. DltA subfamily.

It localises to the cytoplasm. The catalysed reaction is holo-[D-alanyl-carrier protein] + D-alanine + ATP = D-alanyl-[D-alanyl-carrier protein] + AMP + diphosphate. It functions in the pathway cell wall biogenesis; lipoteichoic acid biosynthesis. Functionally, catalyzes the first step in the D-alanylation of lipoteichoic acid (LTA), the activation of D-alanine and its transfer onto the D-alanyl carrier protein (Dcp) DltC. In an ATP-dependent two-step reaction, forms a high energy D-alanyl-AMP intermediate, followed by transfer of the D-alanyl residue as a thiol ester to the phosphopantheinyl prosthetic group of the Dcp. D-alanylation of LTA plays an important role in modulating the properties of the cell wall in Gram-positive bacteria, influencing the net charge of the cell wall. The chain is D-alanine--D-alanyl carrier protein ligase from Listeria monocytogenes serotype 4a (strain HCC23).